A 331-amino-acid polypeptide reads, in one-letter code: Photosystem II assembly lipoprotein Ycf48 (331 aa).

Residues 1 to 23 (MIPVIRSFLSLLLCVGLTFGLGG) form the signal peptide. Cys-24 is lipidated: N-palmitoyl cysteine. Cys-24 carries the S-diacylglycerol cysteine lipid modification.

This sequence belongs to the Ycf48 family. In terms of assembly, part of early PSII assembly complexes which includes D1 (psbA) and PsbI; not found in mature PSII. Binds to the lumenal side of PSII complexes. Interacts with YidC.

It localises to the cellular thylakoid membrane. A factor required for optimal assembly of photosystem II (PSII), acting in the early stages of PSII assembly. Also plays a role in replacement of photodamaged D1 (psbA). Assists YidC in synthesis of chlorophyll-binding proteins. In Synechococcus sp. (strain RCC307), this protein is Photosystem II assembly lipoprotein Ycf48.